Reading from the N-terminus, the 427-residue chain is Enolase (427 aa).

Gln163 contacts (2R)-2-phosphoglycerate. Residue Glu205 is the Proton donor of the active site. The Mg(2+) site is built by Asp242, Glu287, and Asp314. Residues Lys339, Arg368, Ser369, and Lys390 each coordinate (2R)-2-phosphoglycerate. The active-site Proton acceptor is Lys339.

This sequence belongs to the enolase family. Mg(2+) serves as cofactor.

It is found in the cytoplasm. The protein localises to the secreted. Its subcellular location is the cell surface. The catalysed reaction is (2R)-2-phosphoglycerate = phosphoenolpyruvate + H2O. The protein operates within carbohydrate degradation; glycolysis; pyruvate from D-glyceraldehyde 3-phosphate: step 4/5. Catalyzes the reversible conversion of 2-phosphoglycerate (2-PG) into phosphoenolpyruvate (PEP). It is essential for the degradation of carbohydrates via glycolysis. This is Enolase from Solibacter usitatus (strain Ellin6076).